The sequence spans 277 residues: Putative protein-disulfide oxidoreductase RC0029 (277 aa).

A signal peptide spans 1–22 (MRSIFIILIFLLFLSSCSEEKA). The tract at residues 34–80 (EHETQNNETSKATNQEAVNSENTTESIVPANDNNQTDEVSTPASQKQ) is disordered. The span at 39-80 (NNETSKATNQEAVNSENTTESIVPANDNNQTDEVSTPASQKQ) shows a compositional bias: polar residues. The Thioredoxin domain occupies 76–265 (ASQKQKNPAI…ISTAVDKALE (190 aa)). Residues Cys118 and Cys121 are joined by a disulfide bond.

The protein belongs to the thioredoxin family. DsbA subfamily.

It is found in the periplasm. In terms of biological role, may be required for disulfide bond formation in some proteins. This chain is Putative protein-disulfide oxidoreductase RC0029, found in Rickettsia conorii (strain ATCC VR-613 / Malish 7).